The chain runs to 34 residues: Unknown protein 5 (34 aa).

The chain is Unknown protein 5 from Pseudotsuga menziesii (Douglas-fir).